A 228-amino-acid chain; its full sequence is Response regulator MprA (228 aa).

Residues 2-116 (RILAVDDDRA…ELLARIRALL (115 aa)) enclose the Response regulatory domain. Residue aspartate 46 is modified to 4-aspartylphosphate. Residues 127 to 225 (SVAMSFSDLT…VRGVGYVLRE (99 aa)) constitute a DNA-binding region (ompR/PhoB-type).

Phosphorylated and dephosphorylated by MprB.

It localises to the cytoplasm. In terms of biological role, member of the two-component regulatory system MprB/MprA which contributes to maintaining a balance among several systems involved in stress resistance and is required for establishment and maintenance of persistent infection in the host. Functions as a transcriptional regulator that recognizes a 19-bp nucleotide motif comprizing two loosely conserved 8-bp direct DNA-binding motif repeats separated by a 3-bp spacer region. In Mycobacterium leprae (strain TN), this protein is Response regulator MprA (mprA).